The following is a 203-amino-acid chain: Endo-type membrane-bound lytic murein transglycosylase A (203 aa).

Residues methionine 1–glycine 15 form the signal peptide. A lipid anchor (N-palmitoyl cysteine) is attached at cysteine 16. Cysteine 16 carries S-diacylglycerol cysteine lipidation.

Belongs to the transglycosylase Slt family.

Its subcellular location is the cell outer membrane. It catalyses the reaction Endolytic cleavage of the (1-&gt;4)-beta-glycosidic linkage between N-acetylmuramic acid (MurNAc) and N-acetylglucosamine (GlcNAc) residues in peptidoglycan with concomitant formation of a 1,6-anhydrobond in the MurNAc residue.. In terms of biological role, murein-degrading enzyme. May play a role in recycling of muropeptides during cell elongation and/or cell division. Preferentially cleaves at a distance of more than two disaccharide units from the ends of the glycan chain. This Klebsiella pneumoniae subsp. pneumoniae (strain ATCC 700721 / MGH 78578) protein is Endo-type membrane-bound lytic murein transglycosylase A.